The chain runs to 367 residues: GMP synthase [glutamine-hydrolyzing] subunit B (367 aa).

The GMPS ATP-PPase domain occupies 2–190 (FDPASFVEEI…LKLPKEISER (189 aa)). An ATP-binding site is contributed by 29–35 (SGGVDST).

In terms of assembly, heterodimer composed of a glutamine amidotransferase subunit (A) and a GMP-binding subunit (B).

It catalyses the reaction XMP + L-glutamine + ATP + H2O = GMP + L-glutamate + AMP + diphosphate + 2 H(+). It participates in purine metabolism; GMP biosynthesis; GMP from XMP (L-Gln route): step 1/1. Catalyzes the synthesis of GMP from XMP. The sequence is that of GMP synthase [glutamine-hydrolyzing] subunit B (guaAB) from Saccharolobus solfataricus (strain ATCC 35092 / DSM 1617 / JCM 11322 / P2) (Sulfolobus solfataricus).